Here is a 637-residue protein sequence, read N- to C-terminus: Probable polypeptide N-acetylgalactosaminyltransferase 8 (637 aa).

Residues 1 to 6 are Cytoplasmic-facing; the sequence is MMFWRK. A helical; Signal-anchor for type II membrane protein transmembrane segment spans residues 7-29; the sequence is LPKALFIGLTLAIAVNLLLVFSS. Over 30 to 637 the chain is Lumenal; it reads KGTLQNLFTG…VRDWGQTNSQ (608 aa). N-linked (GlcNAc...) asparagine glycosylation is found at Asn-85, Asn-107, and Asn-160. Cystine bridges form between Cys-171–Cys-404, Cys-395–Cys-474, Cys-509–Cys-525, Cys-556–Cys-571, and Cys-599–Cys-617. The tract at residues 180–294 is catalytic subdomain A; the sequence is LPSLSVILIF…VGWAEPILAR (115 aa). Asp-221 and Arg-255 together coordinate substrate. The Mn(2+) site is built by Asp-278, His-280, and His-409. The interval 351–412 is catalytic subdomain B; it reads PVKSPSIMGI…PCSRIAHLER (62 aa). Positions 412 and 417 each coordinate substrate. The region spanning 496–634 is the Ricin B-type lectin domain; the sequence is GYGRMKNLLD…QHTVRDWGQT (139 aa).

Belongs to the glycosyltransferase 2 family. GalNAc-T subfamily. Mn(2+) serves as cofactor. Widely expressed. Expressed in heart, skeletal muscle, kidney, liver, small intestine and placenta. Weakly expressed in colon, thymus, spleen, lung and leukocyte.

The protein resides in the golgi apparatus membrane. It carries out the reaction L-seryl-[protein] + UDP-N-acetyl-alpha-D-galactosamine = a 3-O-[N-acetyl-alpha-D-galactosaminyl]-L-seryl-[protein] + UDP + H(+). The enzyme catalyses L-threonyl-[protein] + UDP-N-acetyl-alpha-D-galactosamine = a 3-O-[N-acetyl-alpha-D-galactosaminyl]-L-threonyl-[protein] + UDP + H(+). It participates in protein modification; protein glycosylation. Functionally, probably catalyzes the initial reaction in O-linked oligosaccharide biosynthesis, the transfer of an N-acetyl-D-galactosamine residue to a serine or threonine residue on the protein receptor. The polypeptide is Probable polypeptide N-acetylgalactosaminyltransferase 8 (GALNT8) (Homo sapiens (Human)).